A 328-amino-acid chain; its full sequence is MAKDIRVLLYYKYVPIENAEKFAADHLAFCKSIGLKGRILVADEGINGTVSGDYETTQKYMDYVHSLPGMEDLWFKIDEENEQAFKKMFVRYKKEIVHLGLEDNDFDNDINPLETTGAYLSPKEFKEALLDEDTVVLDTRNDYEYDLGHFRGAIRPDIRNFRELPQWVRDNKEKFMDKRVIVYCTGGVRCEKFSGWMVREGYKDVGQLHGGIATYGKDPEVQGELWDGKMYVFDERISVDINHVNPVVIGKDWFDGTPCERYVNCGNPECNRRILTSEENEDKYLRGCSHECRVHPRNRYVAENGLSQAEVVERLAAIGESLETLVAQ.

A Rhodanese domain is found at 130–224 (LDEDTVVLDT…YGKDPEVQGE (95 aa)). Cysteine 184 acts as the Cysteine persulfide intermediate in catalysis.

The protein belongs to the TrhO family.

The catalysed reaction is uridine(34) in tRNA + AH2 + O2 = 5-hydroxyuridine(34) in tRNA + A + H2O. Functionally, catalyzes oxygen-dependent 5-hydroxyuridine (ho5U) modification at position 34 in tRNAs. The polypeptide is tRNA uridine(34) hydroxylase (Streptococcus sanguinis (strain SK36)).